A 309-amino-acid polypeptide reads, in one-letter code: 2-phospho-L-lactate transferase (309 aa).

7,8-didemethyl-8-hydroxy-5-deazariboflavin-binding residues include Asp-50 and Arg-89.

This sequence belongs to the CofD family. Homodimer. It depends on Mg(2+) as a cofactor.

The enzyme catalyses (2S)-lactyl-2-diphospho-5'-guanosine + 7,8-didemethyl-8-hydroxy-5-deazariboflavin = oxidized coenzyme F420-0 + GMP + H(+). It functions in the pathway cofactor biosynthesis; coenzyme F420 biosynthesis. Its function is as follows. Catalyzes the transfer of the 2-phospholactate moiety from (2S)-lactyl-2-diphospho-5'-guanosine to 7,8-didemethyl-8-hydroxy-5-deazariboflavin (FO) with the formation of oxidized coenzyme F420-0 and GMP. In Methanococcus maripaludis (strain DSM 14266 / JCM 13030 / NBRC 101832 / S2 / LL), this protein is 2-phospho-L-lactate transferase.